Consider the following 256-residue polypeptide: Ubiquinone/menaquinone biosynthesis C-methyltransferase UbiE (256 aa).

The span at 1 to 12 (MNDQRKGDHAEP) shows a compositional bias: basic and acidic residues. The tract at residues 1-22 (MNDQRKGDHAEPTTHFGYQDVP) is disordered. Residues Thr-79, Asp-100, and 128–129 (DA) contribute to the S-adenosyl-L-methionine site.

It belongs to the class I-like SAM-binding methyltransferase superfamily. MenG/UbiE family.

It carries out the reaction a 2-demethylmenaquinol + S-adenosyl-L-methionine = a menaquinol + S-adenosyl-L-homocysteine + H(+). The catalysed reaction is a 2-methoxy-6-(all-trans-polyprenyl)benzene-1,4-diol + S-adenosyl-L-methionine = a 5-methoxy-2-methyl-3-(all-trans-polyprenyl)benzene-1,4-diol + S-adenosyl-L-homocysteine + H(+). The protein operates within quinol/quinone metabolism; menaquinone biosynthesis; menaquinol from 1,4-dihydroxy-2-naphthoate: step 2/2. Its pathway is cofactor biosynthesis; ubiquinone biosynthesis. Its function is as follows. Methyltransferase required for the conversion of demethylmenaquinol (DMKH2) to menaquinol (MKH2) and the conversion of 2-polyprenyl-6-methoxy-1,4-benzoquinol (DDMQH2) to 2-polyprenyl-3-methyl-6-methoxy-1,4-benzoquinol (DMQH2). The protein is Ubiquinone/menaquinone biosynthesis C-methyltransferase UbiE of Pseudomonas putida (Arthrobacter siderocapsulatus).